Here is a 405-residue protein sequence, read N- to C-terminus: Probable tRNA sulfurtransferase (405 aa).

The THUMP domain occupies 60 to 165 (TEVDKRLKKV…QDAVYISNQL (106 aa)). ATP contacts are provided by residues 183–184 (ML), 208–209 (HF), Arg-265, Gly-287, and Gln-296.

This sequence belongs to the ThiI family.

It localises to the cytoplasm. It catalyses the reaction [ThiI sulfur-carrier protein]-S-sulfanyl-L-cysteine + a uridine in tRNA + 2 reduced [2Fe-2S]-[ferredoxin] + ATP + H(+) = [ThiI sulfur-carrier protein]-L-cysteine + a 4-thiouridine in tRNA + 2 oxidized [2Fe-2S]-[ferredoxin] + AMP + diphosphate. It carries out the reaction [ThiS sulfur-carrier protein]-C-terminal Gly-Gly-AMP + S-sulfanyl-L-cysteinyl-[cysteine desulfurase] + AH2 = [ThiS sulfur-carrier protein]-C-terminal-Gly-aminoethanethioate + L-cysteinyl-[cysteine desulfurase] + A + AMP + 2 H(+). It functions in the pathway cofactor biosynthesis; thiamine diphosphate biosynthesis. Functionally, catalyzes the ATP-dependent transfer of a sulfur to tRNA to produce 4-thiouridine in position 8 of tRNAs, which functions as a near-UV photosensor. Also catalyzes the transfer of sulfur to the sulfur carrier protein ThiS, forming ThiS-thiocarboxylate. This is a step in the synthesis of thiazole, in the thiamine biosynthesis pathway. The sulfur is donated as persulfide by IscS. This is Probable tRNA sulfurtransferase from Lactobacillus acidophilus (strain ATCC 700396 / NCK56 / N2 / NCFM).